The sequence spans 182 residues: Adenine phosphoribosyltransferase (182 aa).

It belongs to the purine/pyrimidine phosphoribosyltransferase family. Homodimer.

It localises to the cytoplasm. It catalyses the reaction AMP + diphosphate = 5-phospho-alpha-D-ribose 1-diphosphate + adenine. It functions in the pathway purine metabolism; AMP biosynthesis via salvage pathway; AMP from adenine: step 1/1. In terms of biological role, catalyzes a salvage reaction resulting in the formation of AMP, that is energically less costly than de novo synthesis. This chain is Adenine phosphoribosyltransferase, found in Stutzerimonas stutzeri (Pseudomonas stutzeri).